Consider the following 500-residue polypeptide: Glucose-1-phosphate adenylyltransferase small subunit 1, chloroplastic/amyloplastic (500 aa).

The transit peptide at 1–50 directs the protein to the chloroplast; it reads MAMMAMGAASWAPIPAPARAAAAFYPGRDLAAARRRRGAAARRPFVFTPR.

This sequence belongs to the bacterial/plant glucose-1-phosphate adenylyltransferase family. In terms of assembly, heterotetramer composed of two small and two large subunits. Expressed in leaves.

Its subcellular location is the plastid. It localises to the chloroplast. The protein resides in the amyloplast. It carries out the reaction alpha-D-glucose 1-phosphate + ATP + H(+) = ADP-alpha-D-glucose + diphosphate. It participates in glycan biosynthesis; starch biosynthesis. With respect to regulation, activated by 3'phosphoglycerate, inhibited by orthophosphate. Allosteric regulation. Involved in synthesis of starch. Catalyzes the synthesis of ADP-glucose, a molecule that serves as an activated glycosyl donor for alpha-1,4-glucan synthesis. Essential for starch synthesis in leaf chloroplasts and endosperm amyloplasts. The polypeptide is Glucose-1-phosphate adenylyltransferase small subunit 1, chloroplastic/amyloplastic (Oryza sativa subsp. japonica (Rice)).